We begin with the raw amino-acid sequence, 342 residues long: Ketol-acid reductoisomerase (NADP(+)) (342 aa).

Residues 2 to 181 (VKVYYNGDIQ…GGARAGVLET (180 aa)) form the KARI N-terminal Rossmann domain. NADP(+)-binding positions include 25-28 (YGSQ), Arg48, Ser52, and 82-85 (DEQQ). Residue His107 is part of the active site. Residue Gly133 participates in NADP(+) binding. Residues 182–327 (TFKEETETDL…RKLREMMPFV (146 aa)) form the KARI C-terminal knotted domain. 4 residues coordinate Mg(2+): Asp190, Glu194, Glu226, and Glu230. Ser251 contacts substrate.

The protein belongs to the ketol-acid reductoisomerase family. It depends on Mg(2+) as a cofactor.

The enzyme catalyses (2R)-2,3-dihydroxy-3-methylbutanoate + NADP(+) = (2S)-2-acetolactate + NADPH + H(+). The catalysed reaction is (2R,3R)-2,3-dihydroxy-3-methylpentanoate + NADP(+) = (S)-2-ethyl-2-hydroxy-3-oxobutanoate + NADPH + H(+). It participates in amino-acid biosynthesis; L-isoleucine biosynthesis; L-isoleucine from 2-oxobutanoate: step 2/4. It functions in the pathway amino-acid biosynthesis; L-valine biosynthesis; L-valine from pyruvate: step 2/4. Involved in the biosynthesis of branched-chain amino acids (BCAA). Catalyzes an alkyl-migration followed by a ketol-acid reduction of (S)-2-acetolactate (S2AL) to yield (R)-2,3-dihydroxy-isovalerate. In the isomerase reaction, S2AL is rearranged via a Mg-dependent methyl migration to produce 3-hydroxy-3-methyl-2-ketobutyrate (HMKB). In the reductase reaction, this 2-ketoacid undergoes a metal-dependent reduction by NADPH to yield (R)-2,3-dihydroxy-isovalerate. This is Ketol-acid reductoisomerase (NADP(+)) from Bacillus pumilus (strain SAFR-032).